A 345-amino-acid chain; its full sequence is Dihydroorotate dehydrogenase (quinone) (345 aa).

FMN is bound by residues 65 to 69 (AGLDK) and threonine 89. Position 69 (lysine 69) interacts with substrate. 114–118 (NRMGF) is a substrate binding site. 2 residues coordinate FMN: asparagine 142 and asparagine 175. Position 175 (asparagine 175) interacts with substrate. Residue serine 178 is the Nucleophile of the active site. Position 180 (asparagine 180) interacts with substrate. FMN-binding residues include lysine 220 and threonine 248. 249–250 (NT) contributes to the substrate binding site. FMN contacts are provided by residues glycine 271, glycine 300, and 321 to 322 (YT).

This sequence belongs to the dihydroorotate dehydrogenase family. Type 2 subfamily. Monomer. FMN serves as cofactor.

It is found in the cell membrane. The enzyme catalyses (S)-dihydroorotate + a quinone = orotate + a quinol. It functions in the pathway pyrimidine metabolism; UMP biosynthesis via de novo pathway; orotate from (S)-dihydroorotate (quinone route): step 1/1. In terms of biological role, catalyzes the conversion of dihydroorotate to orotate with quinone as electron acceptor. This chain is Dihydroorotate dehydrogenase (quinone), found in Burkholderia ambifaria (strain ATCC BAA-244 / DSM 16087 / CCUG 44356 / LMG 19182 / AMMD) (Burkholderia cepacia (strain AMMD)).